A 96-amino-acid chain; its full sequence is UPF0235 protein YE3436 (96 aa).

The protein belongs to the UPF0235 family.

This Yersinia enterocolitica serotype O:8 / biotype 1B (strain NCTC 13174 / 8081) protein is UPF0235 protein YE3436.